A 312-amino-acid chain; its full sequence is Elongation factor Ts (312 aa).

The interval 84-87 is involved in Mg(2+) ion dislocation from EF-Tu; the sequence is TDFL.

Belongs to the EF-Ts family.

Its subcellular location is the cytoplasm. In terms of biological role, associates with the EF-Tu.GDP complex and induces the exchange of GDP to GTP. It remains bound to the aminoacyl-tRNA.EF-Tu.GTP complex up to the GTP hydrolysis stage on the ribosome. The chain is Elongation factor Ts from Caulobacter sp. (strain K31).